The sequence spans 250 residues: uncharacterized protein (250 aa).

Residues 7–244 (LKVEDLHVYR…YKKECGKCYK (238 aa)) enclose the ABC transporter domain. 39-46 (GPNGAGKS) is an ATP binding site.

Belongs to the ABC transporter superfamily.

This is an uncharacterized protein from Methanocaldococcus jannaschii (strain ATCC 43067 / DSM 2661 / JAL-1 / JCM 10045 / NBRC 100440) (Methanococcus jannaschii).